The chain runs to 193 residues: Holliday junction branch migration complex subunit RuvA (193 aa).

The segment at 1–64 is domain I; sequence MIGRIQGTLV…EDAQQLFGFA (64 aa). The domain II stretch occupies residues 65–139; it reads TEIEREAFRQ…GKLAPDLGIT (75 aa). The interval 139–143 is flexible linker; the sequence is TGGKP. Positions 144–193 are domain III; sequence QAIEATSEVLQALLSLGYSEKEALLALKQIPPETSVSDGIRMGLKYLSKP.

The protein belongs to the RuvA family. Homotetramer. Forms an RuvA(8)-RuvB(12)-Holliday junction (HJ) complex. HJ DNA is sandwiched between 2 RuvA tetramers; dsDNA enters through RuvA and exits via RuvB. An RuvB hexamer assembles on each DNA strand where it exits the tetramer. Each RuvB hexamer is contacted by two RuvA subunits (via domain III) on 2 adjacent RuvB subunits; this complex drives branch migration. In the full resolvosome a probable DNA-RuvA(4)-RuvB(12)-RuvC(2) complex forms which resolves the HJ.

The protein localises to the cytoplasm. In terms of biological role, the RuvA-RuvB-RuvC complex processes Holliday junction (HJ) DNA during genetic recombination and DNA repair, while the RuvA-RuvB complex plays an important role in the rescue of blocked DNA replication forks via replication fork reversal (RFR). RuvA specifically binds to HJ cruciform DNA, conferring on it an open structure. The RuvB hexamer acts as an ATP-dependent pump, pulling dsDNA into and through the RuvAB complex. HJ branch migration allows RuvC to scan DNA until it finds its consensus sequence, where it cleaves and resolves the cruciform DNA. In Polynucleobacter asymbioticus (strain DSM 18221 / CIP 109841 / QLW-P1DMWA-1) (Polynucleobacter necessarius subsp. asymbioticus), this protein is Holliday junction branch migration complex subunit RuvA.